The chain runs to 257 residues: Thiazole synthase (257 aa).

Residue K96 is the Schiff-base intermediate with DXP of the active site. Residues G157, 184–185, and 206–207 contribute to the 1-deoxy-D-xylulose 5-phosphate site; these read AG and NT.

Belongs to the ThiG family. In terms of assembly, homotetramer. Forms heterodimers with either ThiH or ThiS.

Its subcellular location is the cytoplasm. The catalysed reaction is [ThiS sulfur-carrier protein]-C-terminal-Gly-aminoethanethioate + 2-iminoacetate + 1-deoxy-D-xylulose 5-phosphate = [ThiS sulfur-carrier protein]-C-terminal Gly-Gly + 2-[(2R,5Z)-2-carboxy-4-methylthiazol-5(2H)-ylidene]ethyl phosphate + 2 H2O + H(+). It participates in cofactor biosynthesis; thiamine diphosphate biosynthesis. Its function is as follows. Catalyzes the rearrangement of 1-deoxy-D-xylulose 5-phosphate (DXP) to produce the thiazole phosphate moiety of thiamine. Sulfur is provided by the thiocarboxylate moiety of the carrier protein ThiS. In vitro, sulfur can be provided by H(2)S. In Agrobacterium fabrum (strain C58 / ATCC 33970) (Agrobacterium tumefaciens (strain C58)), this protein is Thiazole synthase.